The following is a 127-amino-acid chain: Glycine cleavage system H protein (127 aa).

The 83-residue stretch at 22 to 104 folds into the Lipoyl-binding domain; sequence KVRIGITDFA…YEKAWMIVVE (83 aa). K63 is subject to N6-lipoyllysine.

This sequence belongs to the GcvH family. In terms of assembly, the glycine cleavage system is composed of four proteins: P, T, L and H. The cofactor is (R)-lipoate.

Its function is as follows. The glycine cleavage system catalyzes the degradation of glycine. The H protein shuttles the methylamine group of glycine from the P protein to the T protein. In terms of biological role, is also involved in protein lipoylation via its role as an octanoyl/lipoyl carrier protein intermediate. The polypeptide is Glycine cleavage system H protein (Bacillus licheniformis (strain ATCC 14580 / DSM 13 / JCM 2505 / CCUG 7422 / NBRC 12200 / NCIMB 9375 / NCTC 10341 / NRRL NRS-1264 / Gibson 46)).